A 388-amino-acid chain; its full sequence is Formate-dependent phosphoribosylglycinamide formyltransferase (388 aa).

N(1)-(5-phospho-beta-D-ribosyl)glycinamide contacts are provided by residues 20-21 (EL) and Glu-80. ATP is bound by residues Arg-112, Lys-153, 158–163 (SSGKGQ), 193–196 (EEFV), and Glu-201. Positions 117-306 (RLASEKLGLR…EFEIHVRSIL (190 aa)) constitute an ATP-grasp domain. Residues Glu-265 and Glu-277 each coordinate Mg(2+). N(1)-(5-phospho-beta-D-ribosyl)glycinamide is bound by residues Asp-284, Lys-352, and 359–360 (RR).

The protein belongs to the PurK/PurT family. Homodimer.

It carries out the reaction N(1)-(5-phospho-beta-D-ribosyl)glycinamide + formate + ATP = N(2)-formyl-N(1)-(5-phospho-beta-D-ribosyl)glycinamide + ADP + phosphate + H(+). It functions in the pathway purine metabolism; IMP biosynthesis via de novo pathway; N(2)-formyl-N(1)-(5-phospho-D-ribosyl)glycinamide from N(1)-(5-phospho-D-ribosyl)glycinamide (formate route): step 1/1. Its function is as follows. Involved in the de novo purine biosynthesis. Catalyzes the transfer of formate to 5-phospho-ribosyl-glycinamide (GAR), producing 5-phospho-ribosyl-N-formylglycinamide (FGAR). Formate is provided by PurU via hydrolysis of 10-formyl-tetrahydrofolate. In Methanococcus vannielii (strain ATCC 35089 / DSM 1224 / JCM 13029 / OCM 148 / SB), this protein is Formate-dependent phosphoribosylglycinamide formyltransferase.